The sequence spans 170 residues: Adenine phosphoribosyltransferase (170 aa).

It belongs to the purine/pyrimidine phosphoribosyltransferase family. In terms of assembly, homodimer.

It localises to the cytoplasm. It catalyses the reaction AMP + diphosphate = 5-phospho-alpha-D-ribose 1-diphosphate + adenine. Its pathway is purine metabolism; AMP biosynthesis via salvage pathway; AMP from adenine: step 1/1. Its function is as follows. Catalyzes a salvage reaction resulting in the formation of AMP, that is energically less costly than de novo synthesis. The chain is Adenine phosphoribosyltransferase from Mycoplasma mycoides subsp. mycoides SC (strain CCUG 32753 / NCTC 10114 / PG1).